The following is an 876-amino-acid chain: Radial spoke head 10 homolog B (876 aa).

Positions 1-16 are enriched in basic and acidic residues; sequence MVKEKKKADKKGDKSA. Residues 1-71 are disordered; sequence MVKEKKKADK…VQMEQSEEET (71 aa). Positions 17–37 are enriched in polar residues; sequence RSPSSISDNPEASKQDSNASK. Low complexity predominate over residues 39–50; sequence EVAPSAVVPVVE. MORN repeat units follow at residues 86-108, 109-129, 132-154, 155-172, 179-196, 204-225, 227-244, 251-268, 284-305, and 307-328; these read YEGEKVRGLYEGEGFAVFQGGNT, YHGMFSEGLMHGQGTYIWADG, YEGDFVKNIPMNHGVYTWPDGST, YEGEVTNGMRNGFGMFKC, YIGHWCHGKRHGKGSIYY, YEGDWVYNIKKGWGIRCYKSGN, YEGQWENNMRHGEGRMRW, YTGHWEKGIQNGFGTHTW, YIGEFVNGFRHGQGKFYYASGA, and YEGEWASNKKQGRGRMTFKNGH. A compositionally biased stretch (polar residues) spans 356 to 372; the sequence is WSDASQRSRQPRGSSVS. The tract at residues 356-386 is disordered; sequence WSDASQRSRQPRGSSVSAVREPETLRKLDGS. A compositionally biased stretch (basic and acidic residues) spans 375 to 386; that stretch reads REPETLRKLDGS. Residues 790 to 832 are a coiled coil; sequence LKEKVKENQLQEAELAQQRQIENEELEARLNILREEEARKQDF. The segment at 839 to 876 is disordered; that stretch reads LKEPSEIPASQPLTPSPPKEDLASIQTSKASPGKKKKK.

Interacts with RSPH6A. Does not appear to be part of the axonemal radial spoke complexes 1 or 2. In terms of tissue distribution, expressed in ependymal cells (at protein level).

The protein resides in the cytoplasm. It is found in the cytoskeleton. It localises to the cilium axoneme. The protein localises to the cell projection. Its subcellular location is the cilium. The protein resides in the flagellum. Functionally, may function as part of the axonemal radial spoke complex 3 (RS3). Radial spoke complexes are important for ciliary motility. This Mus musculus (Mouse) protein is Radial spoke head 10 homolog B.